An 85-amino-acid polypeptide reads, in one-letter code: Progonadoliberin-2 (85 aa).

The N-terminal stretch at 1–23 (MCVSRLVLLFGLLLCVGAQLSNA) is a signal peptide. Position 24 is a pyrrolidone carboxylic acid (glutamine 24). Residue glycine 33 is modified to Glycine amide.

It belongs to the GnRH family.

The protein resides in the secreted. Its function is as follows. Stimulates the secretion of gonadotropins. In Morone saxatilis (Striped bass), this protein is Progonadoliberin-2 (gnrh2).